A 200-amino-acid chain; its full sequence is Large ribosomal subunit protein uL4 (200 aa).

The tract at residues 43-67 is disordered; it reads RAQKTRAEVSGSGKKPWRQKGTGRA.

This sequence belongs to the universal ribosomal protein uL4 family. In terms of assembly, part of the 50S ribosomal subunit.

In terms of biological role, one of the primary rRNA binding proteins, this protein initially binds near the 5'-end of the 23S rRNA. It is important during the early stages of 50S assembly. It makes multiple contacts with different domains of the 23S rRNA in the assembled 50S subunit and ribosome. Its function is as follows. Forms part of the polypeptide exit tunnel. The chain is Large ribosomal subunit protein uL4 from Haemophilus influenzae (strain PittEE).